Here is a 199-residue protein sequence, read N- to C-terminus: Thymidine kinase (199 aa).

ATP-binding positions include 9–16 and 93–96; these read GAMSSGKT and DEAQ. Glu94 serves as the catalytic Proton acceptor. Zn(2+) contacts are provided by Cys151, Cys154, Cys188, and His191.

It belongs to the thymidine kinase family. As to quaternary structure, homotetramer.

The protein localises to the cytoplasm. It carries out the reaction thymidine + ATP = dTMP + ADP + H(+). The sequence is that of Thymidine kinase from Lactobacillus acidophilus (strain ATCC 700396 / NCK56 / N2 / NCFM).